The following is a 288-amino-acid chain: Acetyl-coenzyme A carboxylase carboxyl transferase subunit beta (288 aa).

The CoA carboxyltransferase N-terminal domain maps to 32–288 (LLLICPKCKK…ILMLHNVEAR (257 aa)). The Zn(2+) site is built by Cys-36, Cys-39, Cys-55, and Cys-58. The C4-type zinc-finger motif lies at 36–58 (CPKCKKTLLKSELADNLDVCREC).

It belongs to the AccD/PCCB family. In terms of assembly, acetyl-CoA carboxylase is a heterohexamer composed of biotin carboxyl carrier protein (AccB), biotin carboxylase (AccC) and two subunits each of ACCase subunit alpha (AccA) and ACCase subunit beta (AccD). The cofactor is Zn(2+).

Its subcellular location is the cytoplasm. The catalysed reaction is N(6)-carboxybiotinyl-L-lysyl-[protein] + acetyl-CoA = N(6)-biotinyl-L-lysyl-[protein] + malonyl-CoA. It participates in lipid metabolism; malonyl-CoA biosynthesis; malonyl-CoA from acetyl-CoA: step 1/1. In terms of biological role, component of the acetyl coenzyme A carboxylase (ACC) complex. Biotin carboxylase (BC) catalyzes the carboxylation of biotin on its carrier protein (BCCP) and then the CO(2) group is transferred by the transcarboxylase to acetyl-CoA to form malonyl-CoA. This Ruminiclostridium cellulolyticum (strain ATCC 35319 / DSM 5812 / JCM 6584 / H10) (Clostridium cellulolyticum) protein is Acetyl-coenzyme A carboxylase carboxyl transferase subunit beta.